The following is a 367-amino-acid chain: Ferrochelatase (367 aa).

2 residues coordinate Fe cation: histidine 226 and glutamate 307.

This sequence belongs to the ferrochelatase family.

It is found in the cytoplasm. The enzyme catalyses heme b + 2 H(+) = protoporphyrin IX + Fe(2+). It participates in porphyrin-containing compound metabolism; protoheme biosynthesis; protoheme from protoporphyrin-IX: step 1/1. Functionally, catalyzes the ferrous insertion into protoporphyrin IX. In Burkholderia pseudomallei (strain 1106a), this protein is Ferrochelatase.